A 154-amino-acid polypeptide reads, in one-letter code: Superoxide dismutase [Cu-Zn] (154 aa).

Cu cation-binding residues include histidine 47, histidine 49, and histidine 64. Cysteines 58 and 147 form a disulfide. Zn(2+)-binding residues include histidine 64, histidine 72, histidine 81, and aspartate 84. Histidine 121 lines the Cu cation pocket. Arginine 144 is a binding site for substrate.

The protein belongs to the Cu-Zn superoxide dismutase family. Homodimer. The cofactor is Cu cation. It depends on Zn(2+) as a cofactor.

Its subcellular location is the cytoplasm. It catalyses the reaction 2 superoxide + 2 H(+) = H2O2 + O2. Functionally, destroys radicals which are normally produced within the cells and which are toxic to biological systems. The sequence is that of Superoxide dismutase [Cu-Zn] (sod1) from Schizosaccharomyces pombe (strain 972 / ATCC 24843) (Fission yeast).